Here is a 408-residue protein sequence, read N- to C-terminus: Elongation factor Tu, chloroplastic (408 aa).

Positions 10-213 (KPHVNIGTIG…KVDEYIPTPE (204 aa)) constitute a tr-type G domain. Positions 19-26 (GHVDHGKT) are G1. GTP is bound at residue 19–26 (GHVDHGKT). Residue threonine 26 coordinates Mg(2+). A G2 region spans residues 59-63 (GITIN). Residues 80–83 (DCPG) are G3. Residues 80 to 84 (DCPGH) and 135 to 138 (NKAD) each bind GTP. Residues 135–138 (NKAD) are G4. The interval 173-175 (SAL) is G5.

The protein belongs to the TRAFAC class translation factor GTPase superfamily. Classic translation factor GTPase family. EF-Tu/EF-1A subfamily.

The protein resides in the plastid. It localises to the chloroplast. The enzyme catalyses GTP + H2O = GDP + phosphate + H(+). Functionally, GTP hydrolase that promotes the GTP-dependent binding of aminoacyl-tRNA to the A-site of ribosomes during protein biosynthesis. In Guillardia theta (Cryptophyte), this protein is Elongation factor Tu, chloroplastic (tufA).